The following is a 383-amino-acid chain: Protein pelota homolog (383 aa).

Belongs to the eukaryotic release factor 1 family. Pelota subfamily. In terms of assembly, component of the Pelota-HBS1L complex, also named Dom34-Hbs1 complex, composed of PELO and HBS1L. A divalent metal cation serves as cofactor.

It localises to the cytoplasm. Functionally, component of the Pelota-HBS1L complex, a complex that recognizes stalled ribosomes and triggers the No-Go Decay (NGD) pathway. In the Pelota-HBS1L complex, PELO recognizes ribosomes stalled at the 3' end of an mRNA and engages stalled ribosomes by destabilizing mRNA in the mRNA channel. Following mRNA extraction from stalled ribosomes by the SKI complex, the Pelota-HBS1L complex promotes recruitment of ABCE1, which drives the disassembly of stalled ribosomes, followed by degradation of damaged mRNAs as part of the NGD pathway. The polypeptide is Protein pelota homolog (pelo) (Xenopus laevis (African clawed frog)).